Here is a 643-residue protein sequence, read N- to C-terminus: Threonine--tRNA ligase (643 aa).

One can recognise a TGS domain in the interval 1 to 61 (MPIITLPDGS…SEDATLEIIT (61 aa)). The catalytic stretch occupies residues 243-534 (DHRKIGKALD…ITEEYAGFFP (292 aa)). C334, H385, and H511 together coordinate Zn(2+).

Belongs to the class-II aminoacyl-tRNA synthetase family. As to quaternary structure, homodimer. It depends on Zn(2+) as a cofactor.

The protein localises to the cytoplasm. The catalysed reaction is tRNA(Thr) + L-threonine + ATP = L-threonyl-tRNA(Thr) + AMP + diphosphate + H(+). Its function is as follows. Catalyzes the attachment of threonine to tRNA(Thr) in a two-step reaction: L-threonine is first activated by ATP to form Thr-AMP and then transferred to the acceptor end of tRNA(Thr). Also edits incorrectly charged L-seryl-tRNA(Thr). This chain is Threonine--tRNA ligase, found in Glaesserella parasuis serovar 5 (strain SH0165) (Haemophilus parasuis).